The following is a 2167-amino-acid chain: GTPase-activating protein BEM2/IPL2 (2167 aa).

3 disordered regions span residues 1–209, 243–305, and 353–372; these read MKGL…NDNE, TNYN…ASAR, and NSSIANENHQQKKQQTNNQA. Over residues 12 to 51 the composition is skewed to low complexity; the sequence is SSTASASSSSTSTSHKTTTASTASSSSPSSSSQTIRNSTS. K27 participates in a covalent cross-link: Glycyl lysine isopeptide (Lys-Gly) (interchain with G-Cter in ubiquitin). Basic residues predominate over residues 58–70; sequence HSHHHHGQGHSHH. The span at 89–118 shows a compositional bias: polar residues; it reads KQYTSTSSSQVNLGMYHSDTNTRSSRSIAS. S129 carries the post-translational modification Phosphoserine. Residues 134–145 are compositionally biased toward polar residues; the sequence is SNSSSQKSNAQD. 2 stretches are compositionally biased toward low complexity: residues 160 to 177 and 187 to 207; these read SLLPSRSSSLSPPQSRCS and NTSGISNSSGTNNNNSNNNND. A compositionally biased stretch (polar residues) spans 243 to 252; sequence TNYNSSMTAP. The residue at position 283 (S283) is a Phosphoserine. Residues 289 to 300 are compositionally biased toward low complexity; sequence SSSTTATNSGND. The region spanning 592 to 859 is the Ras-GEF domain; the sequence is DITTLADEVH…MKLSVQHEPP (268 aa). Residues S1012 and S1016 each carry the phosphoserine modification. The residue at position 1038 (T1038) is a Phosphothreonine. Residues S1046, S1054, and S1128 each carry the phosphoserine modification. Residues 1771–1794 show a composition bias toward polar residues; sequence ISGTHSDNDHSYNINKNTGQTPSL. A disordered region spans residues 1771 to 1828; the sequence is ISGTHSDNDHSYNINKNTGQTPSLGSVMESNNSARNRRDSRASFSTNRSSVVSNSSHN. Low complexity predominate over residues 1812 to 1828; the sequence is ASFSTNRSSVVSNSSHN. The PH domain maps to 1846–1948; sequence GFNTSSSNYS…WIKMIKASKR (103 aa). The Rho-GAP domain maps to 1967–2165; the sequence is VPLEDVCERE…DFIKNPNDYF (199 aa).

Functionally, GTPase-activating protein (GAP) for RHO1 and RHO2. Involved in the control of cellular morphogenesis. Required for proper bud site selection and bud emergence. In Saccharomyces cerevisiae (strain ATCC 204508 / S288c) (Baker's yeast), this protein is GTPase-activating protein BEM2/IPL2 (BEM2).